The sequence spans 275 residues: MSITPSNQNITSLLKKESILNALERGIRLDGRKNSDYRPISVTLNYAKKAEGSALVKLGDTMVLAGVKLEEEEPFPDTPNQGNLVVNVELLPLAYETFEPGPPDENAIELARVVDRSLRDSKAVDLSKLVIIPGKKVWTAWVDVYVLDYGGNVLDACTLAAVAALYNTKLPKVEIEGDNVKIIKEEKTDVTPIAYPVVTVTVAKIGKYLVVDPSLDEESIADVKISFSYVQDGRIVGMQKSNFGSLSLQEVDVAESLARSASQKLFEELKKQINM.

Belongs to the RNase PH family. Rrp42 subfamily. As to quaternary structure, component of the archaeal exosome complex. Forms a hexameric ring-like arrangement composed of 3 Rrp41-Rrp42 heterodimers. The hexameric ring associates with a trimer of Rrp4 and/or Csl4 subunits.

Its subcellular location is the cytoplasm. Its function is as follows. Non-catalytic component of the exosome, which is a complex involved in RNA degradation. Contributes to the structuring of the Rrp41 active site. This chain is Exosome complex component Rrp42, found in Sulfurisphaera tokodaii (strain DSM 16993 / JCM 10545 / NBRC 100140 / 7) (Sulfolobus tokodaii).